Here is a 599-residue protein sequence, read N- to C-terminus: UvrABC system protein C (599 aa).

A GIY-YIG domain is found at 15 to 93; that stretch reads DNPGVYQYYD…IKTLQPRYNI (79 aa). Residues 207 to 242 form the UVR domain; sequence KDSMKDFKKVMTNLAQNMHFEEAQKIKEKIEILENY.

The protein belongs to the UvrC family. In terms of assembly, interacts with UvrB in an incision complex.

Its subcellular location is the cytoplasm. Its function is as follows. The UvrABC repair system catalyzes the recognition and processing of DNA lesions. UvrC both incises the 5' and 3' sides of the lesion. The N-terminal half is responsible for the 3' incision and the C-terminal half is responsible for the 5' incision. This is UvrABC system protein C from Flavobacterium psychrophilum (strain ATCC 49511 / DSM 21280 / CIP 103535 / JIP02/86).